The sequence spans 597 residues: uncharacterized protein (597 aa).

2 disordered regions span residues 165-197 (NSRA…IFSK) and 278-344 (ERSS…RGTL). Residues 169 to 178 (VPPPAPPNPP) show a composition bias toward pro residues. The span at 179–189 (KMEKHMSHDTS) shows a compositional bias: basic and acidic residues. The span at 293–313 (STEVSITSSSPSPSSSSSTST) shows a compositional bias: low complexity. Positions 402 to 465 (WSLDDVLLWL…LDDLSKIIEN (64 aa)) constitute an SAM domain. Positions 576 to 597 (EESQQKESSSSGISSSPQTPTE) are disordered. A compositionally biased stretch (low complexity) spans 581-597 (KESSSSGISSSPQTPTE).

This is an uncharacterized protein from Caenorhabditis elegans.